The sequence spans 466 residues: Asparagine--tRNA ligase (466 aa).

The protein belongs to the class-II aminoacyl-tRNA synthetase family. Homodimer.

It localises to the cytoplasm. It catalyses the reaction tRNA(Asn) + L-asparagine + ATP = L-asparaginyl-tRNA(Asn) + AMP + diphosphate + H(+). This Shewanella pealeana (strain ATCC 700345 / ANG-SQ1) protein is Asparagine--tRNA ligase.